A 94-amino-acid chain; its full sequence is Large ribosomal subunit protein bL31 (94 aa).

The tract at residues 64 to 94 (KYGMANPDEDSTKNTKSSKKETSEDSSSKGS) is disordered. The span at 73–94 (DSTKNTKSSKKETSEDSSSKGS) shows a compositional bias: basic and acidic residues.

The protein belongs to the bacterial ribosomal protein bL31 family. Type A subfamily. As to quaternary structure, part of the 50S ribosomal subunit.

Its function is as follows. Binds the 23S rRNA. The chain is Large ribosomal subunit protein bL31 from Prochlorococcus marinus (strain SARG / CCMP1375 / SS120).